A 60-amino-acid chain; its full sequence is Ras-related protein Rab-2A (60 aa).

GTP-binding residues include Ser-1, Cys-2, and Thr-19. Ser-1 is a Mg(2+) binding site. The short motif at 16-24 is the Effector region element; it reads HDLTIGVEF. Thr-19 is a binding site for Mg(2+).

The protein belongs to the small GTPase superfamily. Rab family. As to quaternary structure, interacts with PRKCI. Interacts with TRIP11. Interacts (in GTP-bound form) with GARIN1B. Interacts (GTP-bound) with HOPS complex component VPS39; interaction contributes to obtaining a functional HOPS complex that promotes autophagosome-lysosome membrane fusion driven by STX17-SNAP29-VAMP8. May interact with VPS41. The cofactor is Mg(2+). Prenylated. Prenylation is required for association with cellular membranes.

The protein localises to the endoplasmic reticulum-Golgi intermediate compartment membrane. It localises to the melanosome. It is found in the endoplasmic reticulum membrane. Its subcellular location is the golgi apparatus membrane. The protein resides in the cytoplasmic vesicle. The protein localises to the secretory vesicle. It localises to the acrosome. It is found in the autophagosome membrane. It carries out the reaction GTP + H2O = GDP + phosphate + H(+). Its activity is regulated as follows. Regulated by guanine nucleotide exchange factors (GEFs) which promote the exchange of bound GDP for free GTP, GTPase activating proteins (GAPs) which increase the GTP hydrolysis activity, and GDP dissociation inhibitors (GDIs) which inhibit the dissociation of the nucleotide from the GTPase. The small GTPases Rab are key regulators of intracellular membrane trafficking, from the formation of transport vesicles to their fusion with membranes. Rabs cycle between active GTP-bound and inactive GDP-bound states. In their active state, drive transport of vesicular carriers from donor organelles to acceptor organelles to regulate the membrane traffic that maintains organelle identity and morphology. RAB2A regulates autophagy by promoting autophagosome-lysosome fusion via recruitment of the HOPS endosomal tethering complex; this process involves autophagosomal RAB2A and lysosomal RAB39A recruitment of HOPS subcomplexes VPS39-VPS11 and VPS41-VPS16-VPS18-VPS33A, respectively, which assemble into a functional complex to mediate membrane tethering and SNAREs-driven membrane fusion. Required for protein transport from the endoplasmic reticulum to the Golgi complex. Regulates the compacted morphology of the Golgi. Together with RAB2B, redundantly required for efficient autophagic flux. The sequence is that of Ras-related protein Rab-2A from Mesocricetus auratus (Golden hamster).